Reading from the N-terminus, the 572-residue chain is Proline--tRNA ligase (572 aa).

The protein belongs to the class-II aminoacyl-tRNA synthetase family. ProS type 1 subfamily. In terms of assembly, homodimer.

The protein resides in the cytoplasm. The enzyme catalyses tRNA(Pro) + L-proline + ATP = L-prolyl-tRNA(Pro) + AMP + diphosphate. In terms of biological role, catalyzes the attachment of proline to tRNA(Pro) in a two-step reaction: proline is first activated by ATP to form Pro-AMP and then transferred to the acceptor end of tRNA(Pro). As ProRS can inadvertently accommodate and process non-cognate amino acids such as alanine and cysteine, to avoid such errors it has two additional distinct editing activities against alanine. One activity is designated as 'pretransfer' editing and involves the tRNA(Pro)-independent hydrolysis of activated Ala-AMP. The other activity is designated 'posttransfer' editing and involves deacylation of mischarged Ala-tRNA(Pro). The misacylated Cys-tRNA(Pro) is not edited by ProRS. The sequence is that of Proline--tRNA ligase from Shigella dysenteriae serotype 1 (strain Sd197).